Consider the following 443-residue polypeptide: Glutamate--tRNA ligase 1 (443 aa).

The 'HIGH' region signature appears at 7–17; it reads PSPTGYLHVGN. The 'KMSKS' region motif lies at 236–240; the sequence is KISKR. ATP is bound at residue K239.

It belongs to the class-I aminoacyl-tRNA synthetase family. Glutamate--tRNA ligase type 1 subfamily. As to quaternary structure, monomer.

The protein localises to the cytoplasm. The enzyme catalyses tRNA(Glu) + L-glutamate + ATP = L-glutamyl-tRNA(Glu) + AMP + diphosphate. Functionally, catalyzes the attachment of glutamate to tRNA(Glu) in a two-step reaction: glutamate is first activated by ATP to form Glu-AMP and then transferred to the acceptor end of tRNA(Glu). In Ehrlichia chaffeensis (strain ATCC CRL-10679 / Arkansas), this protein is Glutamate--tRNA ligase 1.